We begin with the raw amino-acid sequence, 1709 residues long: Protein SHORTAGE IN CHIASMATA 1 homolog (1709 aa).

Composition is skewed to basic and acidic residues over residues 532–542, 552–568, and 1601–1613; these read PKLQDEDKHSD, DPQK…EGGT, and ESFR…DTPS. Disordered regions lie at residues 532 to 586 and 1566 to 1662; these read PKLQ…SSFP and KRKA…DPTW.

It belongs to the XPF family. In terms of assembly, interacts (via C-terminus) with PTD. Interacts with ZIP4. In terms of tissue distribution, highly expressed in anthers and pistil during meiosis. Expressed in pollen mother cells (PMCs) during meiosis. Expressed at low levels in roots, shoots, leaves, flowers, and glumes.

It is found in the chromosome. The protein resides in the nucleus. It localises to the cytoplasm. The protein localises to the cell membrane. Functionally, essential for normal crossover (CO) formation during meiosis. Essential component for the formation of class I meiotic COs. Interacts with PTD, another meiotic component, to regulate CO formation, possibly by stabilizing the recombination intermediates during meiosis. SHOC1 and PTD may form transient heterotrimeric or heterotetrameric complexes with HEI10 and/or ZIP4 to promote class I COs formation. Does not seem to be involved in early meiotic recombination steps involving double-strand break (DSB) formation, processing, and single-strand invasion. Does not seem to be involved in homologous pairing or synaptonemal complex (SC) assembly. The sequence is that of Protein SHORTAGE IN CHIASMATA 1 homolog from Oryza sativa subsp. japonica (Rice).